The following is a 356-amino-acid chain: sn-glycerol-3-phosphate import ATP-binding protein UgpC (356 aa).

An ABC transporter domain is found at 4 to 235 (LKLQAVTKSW…PASRFVASFI (232 aa)). 37-44 (GPSGCGKS) contacts ATP.

The protein belongs to the ABC transporter superfamily. sn-glycerol-3-phosphate importer (TC 3.A.1.1.3) family. As to quaternary structure, the complex is composed of two ATP-binding proteins (UgpC), two transmembrane proteins (UgpA and UgpE) and a solute-binding protein (UgpB).

Its subcellular location is the cell inner membrane. The catalysed reaction is sn-glycerol 3-phosphate(out) + ATP + H2O = sn-glycerol 3-phosphate(in) + ADP + phosphate + H(+). Part of the ABC transporter complex UgpBAEC involved in sn-glycerol-3-phosphate (G3P) import. Responsible for energy coupling to the transport system. The protein is sn-glycerol-3-phosphate import ATP-binding protein UgpC of Salmonella typhi.